A 221-amino-acid chain; its full sequence is Vesicle transport v-SNARE 11 (221 aa).

Serine 2 is subject to N-acetylserine. Residues 2 to 198 (SDVFDGYERQ…MTRRMNKNKW (197 aa)) are Cytoplasmic-facing. Positions 32 to 93 (EQKKQKLSEI…FKTEVKRITS (62 aa)) form a coiled coil. The chain crosses the membrane as a helical; Anchor for type IV membrane protein span at residues 199–219 (TIGAIIIALIAAIFIILYFKL). Topologically, residues 220–221 (TK) are vesicular.

It belongs to the VTI1 family. Forms SNARE complexes with the t-SNAREs SYP51 and either SYP21 or SYP22 in the PVC, and with a much lower affinity with SYP61 in the TGN. Does not interact with SYP41, SYP42 or VPS45. Binds to EPSIN1. Interacts with SCYL2B. Expressed in roots, stems, flowers and leaves.

Its subcellular location is the golgi apparatus. The protein localises to the trans-Golgi network membrane. It is found in the prevacuolar compartment membrane. The protein resides in the vacuole membrane. In terms of biological role, functions as a v-SNARE responsible for targeting AtELP-containing vesicles from the trans-Golgi network (TGN) to the prevacuolar compartment (PVC) and mediates liposome fusion. May be also involved in retrograde traffic to the cis-Golgi. Promotes the formation of vacuolar membrane 'bulbs'. Necessary to deliver proteins to the lytic vacuole, but seems not involved in storage proteins transport. Required for amyloplast sedimentation in the endodermis during shoot gravitropism, which are thus acting as statoliths. Expression in the endodermis is essential for the shoot gravitropic response, whereas expression in other tissues may be responsible for the correct stem and leaf shape. The protein is Vesicle transport v-SNARE 11 of Arabidopsis thaliana (Mouse-ear cress).